The following is a 1188-amino-acid chain: Integrin alpha-11 (1188 aa).

Residues 1 to 22 form the signal peptide; the sequence is MDFPRGLLVAWTLSLWPGFTDT. The Extracellular portion of the chain corresponds to 23–1141; that stretch reads FNMDTRNPRV…ISKQEDWQVP (1119 aa). FG-GAP repeat units lie at residues 24–85 and 91–151; these read NMDT…NCTK and VTLS…FSKT. Cys76 and Cys83 are disulfide-bonded. N-linked (GlcNAc...) asparagine glycosylation is found at Asn82 and Asn95. 2 disulfides stabilise this stretch: Cys121–Cys139 and Cys129–Cys159. Positions 164–345 constitute a VWFA domain; the sequence is DIVIVLDGSN…AALKDIVDAL (182 aa). N-linked (GlcNAc...) asparagine glycosylation is found at Asn291, Asn331, Asn358, Asn449, and Asn462. FG-GAP repeat units follow at residues 355–406, 411–461, 462–527, 528–586, and 590–650; these read TNKN…VIPH, LKEF…SMHN, NRSL…RFVY, NGTL…NILK, and QRIT…FEPS. Ca(2+) contacts are provided by Asp488, Asn490, Asp492, and Asp496. A glycan (N-linked (GlcNAc...) asparagine) is linked at Asn528. Positions 551, 553, 555, 559, 613, 615, 617, and 621 each coordinate Ca(2+). Asn642 carries N-linked (GlcNAc...) asparagine glycosylation. Intrachain disulfides connect Cys659/Cys668, Cys674/Cys729, and Cys781/Cys787. A glycan (N-linked (GlcNAc...) asparagine) is linked at Asn694. Asn857 is a glycosylation site (N-linked (GlcNAc...) asparagine). Cys881 and Cys893 are oxidised to a cystine. Asn894, Asn973, Asn1031, Asn1039, and Asn1059 each carry an N-linked (GlcNAc...) asparagine glycan. The chain crosses the membrane as a helical span at residues 1142-1164; that stretch reads IWIIVGSTLGGLLLLALLVLALW. Over 1165-1188 the chain is Cytoplasmic; the sequence is KLGFFKSAKRKREPGLGPIPKELK.

Belongs to the integrin alpha chain family. In terms of assembly, heterodimer of an alpha and a beta subunit. Alpha-11 associates with beta-1. Interacts with RAB21.

Its subcellular location is the membrane. Functionally, integrin alpha-11/beta-1 is a receptor for collagen. In Mus musculus (Mouse), this protein is Integrin alpha-11 (Itga11).